The chain runs to 359 residues: 3-dehydroquinate synthase (359 aa).

Residues aspartate 70–lysine 75, glycine 105–aspartate 109, threonine 129–threonine 130, lysine 142, lysine 151, and phenylalanine 169–threonine 172 contribute to the NAD(+) site. 3 residues coordinate Zn(2+): glutamate 184, histidine 247, and histidine 264.

Belongs to the sugar phosphate cyclases superfamily. Dehydroquinate synthase family. Co(2+) is required as a cofactor. Zn(2+) serves as cofactor. It depends on NAD(+) as a cofactor.

The protein localises to the cytoplasm. It catalyses the reaction 7-phospho-2-dehydro-3-deoxy-D-arabino-heptonate = 3-dehydroquinate + phosphate. The protein operates within metabolic intermediate biosynthesis; chorismate biosynthesis; chorismate from D-erythrose 4-phosphate and phosphoenolpyruvate: step 2/7. Its function is as follows. Catalyzes the conversion of 3-deoxy-D-arabino-heptulosonate 7-phosphate (DAHP) to dehydroquinate (DHQ). The polypeptide is 3-dehydroquinate synthase (Francisella tularensis subsp. holarctica (strain FTNF002-00 / FTA)).